The primary structure comprises 155 residues: Small ribosomal subunit protein uS7c (155 aa).

Belongs to the universal ribosomal protein uS7 family. Part of the 30S ribosomal subunit.

It localises to the plastid. The protein resides in the chloroplast. Its function is as follows. One of the primary rRNA binding proteins, it binds directly to 16S rRNA where it nucleates assembly of the head domain of the 30S subunit. This Spathiphyllum wallisii (Peace lily) protein is Small ribosomal subunit protein uS7c (rps7).